Consider the following 208-residue polypeptide: Large ribosomal subunit protein uL4 (208 aa).

Positions 58-77 are disordered; it reads RGGGRKPWRQKGTGRARQGS. Residues 60–71 show a composition bias toward basic residues; it reads GGRKPWRQKGTG.

It belongs to the universal ribosomal protein uL4 family. In terms of assembly, part of the 50S ribosomal subunit.

In terms of biological role, one of the primary rRNA binding proteins, this protein initially binds near the 5'-end of the 23S rRNA. It is important during the early stages of 50S assembly. It makes multiple contacts with different domains of the 23S rRNA in the assembled 50S subunit and ribosome. Forms part of the polypeptide exit tunnel. This chain is Large ribosomal subunit protein uL4, found in Caldicellulosiruptor saccharolyticus (strain ATCC 43494 / DSM 8903 / Tp8T 6331).